We begin with the raw amino-acid sequence, 620 residues long: Glutathione-regulated potassium-efflux system protein KefC (620 aa).

12 helical membrane passes run histidine 4 to valine 24, leucine 26 to leucine 46, serine 54 to leucine 74, glycine 90 to leucine 110, valine 114 to methionine 134, phenylalanine 149 to leucine 169, methionine 178 to leucine 198, valine 218 to glycine 238, glycine 270 to leucine 290, leucine 294 to isoleucine 314, tryptophan 327 to glutamine 347, and serine 359 to asparagine 379. The RCK N-terminal domain maps to glutamine 399–threonine 518. Positions glycine 597–serine 620 are disordered.

The protein belongs to the monovalent cation:proton antiporter 2 (CPA2) transporter (TC 2.A.37) family. KefC subfamily. In terms of assembly, homodimer. Interacts with the regulatory subunit KefF.

The protein localises to the cell inner membrane. In terms of biological role, pore-forming subunit of a potassium efflux system that confers protection against electrophiles. Catalyzes K(+)/H(+) antiport. This chain is Glutathione-regulated potassium-efflux system protein KefC, found in Escherichia coli (strain K12 / MC4100 / BW2952).